The primary structure comprises 506 residues: uncharacterized protein (506 aa).

2 disordered regions span residues 104–144 (PNSS…ATSS) and 397–456 (QQQK…DQLP). A compositionally biased stretch (low complexity) spans 130-144 (ESSPTLSSSSLATSS). Over residues 405 to 443 (IKDEDKNEKENKSENEEKEKEKEKEKEKEKEKEKEKEKE) the composition is skewed to basic and acidic residues. Residues 405–455 (IKDEDKNEKENKSENEEKEKEKEKEKEKEKEKEKEKEKENEEGEEDNGDQL) adopt a coiled-coil conformation.

This is an uncharacterized protein from Dictyostelium discoideum (Social amoeba).